A 635-amino-acid polypeptide reads, in one-letter code: Sodium- and chloride-dependent creatine transporter 1 (635 aa).

Residues 1 to 11 (MANKSTENGIY) show a composition bias toward polar residues. The tract at residues 1 to 27 (MANKSTENGIYSVSGEEKKGPLIAPGP) is disordered. Residues 1-60 (MANKSTENGIYSVSGEEKKGPLIAPGPDGAPAKGDGPAALGAPGSLLAVPPRETWTRQMD) lie on the Cytoplasmic side of the membrane. Residues 61–81 (FIMSCVGFAVGLGNVWRFPYL) traverse the membrane as a helical segment. Residues 82–87 (CYKNGG) lie on the Extracellular side of the membrane. A helical membrane pass occupies residues 88–108 (GVFLIPYILIALIGGIPIFFL). The Cytoplasmic portion of the chain corresponds to 109-138 (EISLGQFMKAGSINVWNICPLFKGLGYASM). Residues 139-159 (VIVFYCNTYYIMVLAWGFYYL) traverse the membrane as a helical segment. Topologically, residues 160-230 (VKSFTTTLPW…LSEGLEVPGA (71 aa)) are extracellular. N-linked (GlcNAc...) asparagine glycosylation is found at asparagine 192 and asparagine 197. A helical transmembrane segment spans residues 231 to 251 (LNWEVTLCLLTCWVLVYFCVW). The Cytoplasmic segment spans residues 252-269 (KGVKSTGKIVYFTATFPY). Residues 270-290 (VVLVVLLVRGVLLPGALDGII) form a helical membrane-spanning segment. The Extracellular segment spans residues 291–304 (YYLKPDWSKLASPQ). A helical transmembrane segment spans residues 305-325 (VWIDAGTQIFFSYAIGLGALT). Topologically, residues 326 to 341 (ALGSYNRFNNNCYKDA) are cytoplasmic. A helical transmembrane segment spans residues 342–362 (IILALINSGTSFFAGFVVFSI). Topologically, residues 363 to 394 (LGFMATEQGVHISKVAESGPGLAFIAYPRAVT) are extracellular. A helical transmembrane segment spans residues 395–415 (LMPVAPLWAALFFFMLLLLGL). Residues 416–444 (DSQFVGVEGFITGLLDLLPASYYFRFQRE) lie on the Cytoplasmic side of the membrane. A helical membrane pass occupies residues 445-465 (ISVALCCTICFVIDLSMVTDG). The Extracellular segment spans residues 466–479 (GMYVFQLFDYYSAS). Residues 480–500 (GTTLLWQAFWECVVVAWVYGA) form a helical membrane-spanning segment. Over 501–520 (DRFMDDVACMIGYRPCPWMK) the chain is Cytoplasmic. The helical transmembrane segment at 521-541 (WCWSFFTPLVCMGIFIFNVVY) threads the bilayer. At 542 to 560 (HEPLVYNNTYVYPWWGEAV) the chain is on the extracellular side. Asparagine 548 is a glycosylation site (N-linked (GlcNAc...) asparagine). A helical transmembrane segment spans residues 561–581 (GWAFALSSMLCVPLHLLGCLL). Over 582–635 (RAKGTMAERWQHLTQPIWGLHHLEYRAQDSDVRGLTTLTPVSESSKVVVVESVM) the chain is Cytoplasmic. Phosphothreonine is present on residues threonine 617 and threonine 620. Position 623 is a phosphoserine (serine 623).

The protein belongs to the sodium:neurotransmitter symporter (SNF) (TC 2.A.22) family. SLC6A8 subfamily. Post-translationally, glycosylated.

It is found in the cell membrane. The protein localises to the apical cell membrane. The catalysed reaction is creatine(out) + chloride(out) + 2 Na(+)(out) = creatine(in) + chloride(in) + 2 Na(+)(in). Creatine:sodium symporter which mediates the uptake of creatine. Plays an important role in supplying creatine to the brain via the blood-brain barrier. This is Sodium- and chloride-dependent creatine transporter 1 (SLC6A8) from Bos taurus (Bovine).